The sequence spans 273 residues: Formamidopyrimidine-DNA glycosylase (273 aa).

Pro-2 acts as the Schiff-base intermediate with DNA in catalysis. Glu-3 serves as the catalytic Proton donor. Catalysis depends on Lys-58, which acts as the Proton donor; for beta-elimination activity. The DNA site is built by His-91, Arg-109, and Arg-154. The FPG-type zinc finger occupies 239 to 273; that stretch reads FCYARTGEPCRICKTPIRQIVQGQRSTFYCPNCQK. The Proton donor; for delta-elimination activity role is filled by Arg-263.

The protein belongs to the FPG family. Monomer. Requires Zn(2+) as cofactor.

The catalysed reaction is Hydrolysis of DNA containing ring-opened 7-methylguanine residues, releasing 2,6-diamino-4-hydroxy-5-(N-methyl)formamidopyrimidine.. It catalyses the reaction 2'-deoxyribonucleotide-(2'-deoxyribose 5'-phosphate)-2'-deoxyribonucleotide-DNA = a 3'-end 2'-deoxyribonucleotide-(2,3-dehydro-2,3-deoxyribose 5'-phosphate)-DNA + a 5'-end 5'-phospho-2'-deoxyribonucleoside-DNA + H(+). Its function is as follows. Involved in base excision repair of DNA damaged by oxidation or by mutagenic agents. Acts as a DNA glycosylase that recognizes and removes damaged bases. Has a preference for oxidized purines, such as 7,8-dihydro-8-oxoguanine (8-oxoG). Has AP (apurinic/apyrimidinic) lyase activity and introduces nicks in the DNA strand. Cleaves the DNA backbone by beta-delta elimination to generate a single-strand break at the site of the removed base with both 3'- and 5'-phosphates. This Janthinobacterium sp. (strain Marseille) (Minibacterium massiliensis) protein is Formamidopyrimidine-DNA glycosylase.